A 555-amino-acid chain; its full sequence is Spermine oxidase (555 aa).

FAD is bound by residues Ala35, Glu55, Arg63, 79-80 (TW), and Val261. The disordered stretch occupies residues 271–307 (AHPRGPEIEPRGEGDHNHDTGEGGQSGENPQQGRWDE). A compositionally biased stretch (basic and acidic residues) spans 274-291 (RGPEIEPRGEGDHNHDTG). FAD is bound by residues Glu519 and 528 to 529 (TT).

The protein belongs to the flavin monoamine oxidase family. It depends on FAD as a cofactor. Widely expressed. Isoform 1 and isoform 2 are expressed at higher level in brain and skeletal muscle. Isoform 7 is found in brain and spleen, isoform 10 is widely expressed but found at lower level in heart, kidney, liver and lung.

It localises to the cytoplasm. The protein resides in the nucleus. The catalysed reaction is spermine + O2 + H2O = 3-aminopropanal + spermidine + H2O2. The protein operates within amine and polyamine degradation; spermine degradation. Its function is as follows. Flavoenzyme which catalyzes the oxidation of spermine to spermidine. Can also use N(1)-acetylspermine and spermidine as substrates, with different affinity depending on the isoform (isozyme) and on the experimental conditions. Plays an important role in the regulation of polyamine intracellular concentration and has the potential to act as a determinant of cellular sensitivity to the antitumor polyamine analogs. May contribute to beta-alanine production via aldehyde dehydrogenase conversion of 3-amino-propanal. The chain is Spermine oxidase (Smox) from Mus musculus (Mouse).